A 113-amino-acid chain; its full sequence is N(2)-fixation sustaining protein CowN (113 aa).

It belongs to the CowN family.

In terms of biological role, is required to sustain N(2)-dependent growth in the presence of low levels of carbon monoxide (CO). Probably acts by protecting the N(2) fixation ability of the nitrogenase complex, which is inactivated in the presence of CO. In Wolinella succinogenes (strain ATCC 29543 / DSM 1740 / CCUG 13145 / JCM 31913 / LMG 7466 / NCTC 11488 / FDC 602W) (Vibrio succinogenes), this protein is N(2)-fixation sustaining protein CowN.